We begin with the raw amino-acid sequence, 552 residues long: Dihydroxy-acid dehydratase (552 aa).

Aspartate 78 serves as a coordination point for Mg(2+). Cysteine 119 contributes to the [2Fe-2S] cluster binding site. Residues aspartate 120 and lysine 121 each contribute to the Mg(2+) site. N6-carboxylysine is present on lysine 121. Position 191 (cysteine 191) interacts with [2Fe-2S] cluster. Glutamate 442 serves as a coordination point for Mg(2+). Residue serine 468 is the Proton acceptor of the active site.

Belongs to the IlvD/Edd family. Homodimer. [2Fe-2S] cluster is required as a cofactor. Requires Mg(2+) as cofactor.

The enzyme catalyses (2R)-2,3-dihydroxy-3-methylbutanoate = 3-methyl-2-oxobutanoate + H2O. It catalyses the reaction (2R,3R)-2,3-dihydroxy-3-methylpentanoate = (S)-3-methyl-2-oxopentanoate + H2O. It functions in the pathway amino-acid biosynthesis; L-isoleucine biosynthesis; L-isoleucine from 2-oxobutanoate: step 3/4. Its pathway is amino-acid biosynthesis; L-valine biosynthesis; L-valine from pyruvate: step 3/4. Functions in the biosynthesis of branched-chain amino acids. Catalyzes the dehydration of (2R,3R)-2,3-dihydroxy-3-methylpentanoate (2,3-dihydroxy-3-methylvalerate) into 2-oxo-3-methylpentanoate (2-oxo-3-methylvalerate) and of (2R)-2,3-dihydroxy-3-methylbutanoate (2,3-dihydroxyisovalerate) into 2-oxo-3-methylbutanoate (2-oxoisovalerate), the penultimate precursor to L-isoleucine and L-valine, respectively. This chain is Dihydroxy-acid dehydratase, found in Clostridium botulinum (strain Alaska E43 / Type E3).